Here is a 134-residue protein sequence, read N- to C-terminus: NADPH-dependent 7-cyano-7-deazaguanine reductase (134 aa).

The active-site Thioimide intermediate is the C48. Catalysis depends on D55, which acts as the Proton donor. Substrate contacts are provided by residues 70-72 (VEL) and 89-90 (QE).

Belongs to the GTP cyclohydrolase I family. QueF type 1 subfamily.

It localises to the cytoplasm. The enzyme catalyses 7-aminomethyl-7-carbaguanine + 2 NADP(+) = 7-cyano-7-deazaguanine + 2 NADPH + 3 H(+). Its pathway is tRNA modification; tRNA-queuosine biosynthesis. Functionally, catalyzes the NADPH-dependent reduction of 7-cyano-7-deazaguanine (preQ0) to 7-aminomethyl-7-deazaguanine (preQ1). This chain is NADPH-dependent 7-cyano-7-deazaguanine reductase, found in Caldanaerobacter subterraneus subsp. tengcongensis (strain DSM 15242 / JCM 11007 / NBRC 100824 / MB4) (Thermoanaerobacter tengcongensis).